Here is a 232-residue protein sequence, read N- to C-terminus: Recombination protein RecR (232 aa).

The segment at 92–107 (CQVCFHLSAEPVCDIC) adopts a C4-type zinc-finger fold. One can recognise a Toprim domain in the interval 115 to 209 (SVICVVSDPR…KVTRIAFGLP (95 aa)).

Belongs to the RecR family.

Its function is as follows. May play a role in DNA repair. It seems to be involved in an RecBC-independent recombinational process of DNA repair. It may act with RecF and RecO. The sequence is that of Recombination protein RecR from Synechocystis sp. (strain ATCC 27184 / PCC 6803 / Kazusa).